A 109-amino-acid chain; its full sequence is Parvalbumin, thymic (109 aa).

Ala-2 is subject to N-acetylalanine. EF-hand domains are found at residues 39-74 (KTPD…FSSS) and 78-109 (LTSA…LVKA). Ca(2+) is bound by residues Asp-52, Asp-54, Ser-56, Glu-63, Asp-91, Asp-93, Asp-95, Lys-97, and Glu-102.

The protein belongs to the parvalbumin family.

Appears to promote immune maturation in bone marrow cells in culture. Binds two calcium ions. The chain is Parvalbumin, thymic from Gallus gallus (Chicken).